The chain runs to 317 residues: Beta-ketoacyl-[acyl-carrier-protein] synthase III (317 aa).

Active-site residues include C112 and H244. The tract at residues 245 to 249 is ACP-binding; it reads QANIR. Residue N274 is part of the active site.

Belongs to the thiolase-like superfamily. FabH family. As to quaternary structure, homodimer.

It localises to the cytoplasm. The catalysed reaction is malonyl-[ACP] + acetyl-CoA + H(+) = 3-oxobutanoyl-[ACP] + CO2 + CoA. The protein operates within lipid metabolism; fatty acid biosynthesis. Catalyzes the condensation reaction of fatty acid synthesis by the addition to an acyl acceptor of two carbons from malonyl-ACP. Catalyzes the first condensation reaction which initiates fatty acid synthesis and may therefore play a role in governing the total rate of fatty acid production. Possesses both acetoacetyl-ACP synthase and acetyl transacylase activities. Its substrate specificity determines the biosynthesis of branched-chain and/or straight-chain of fatty acids. This is Beta-ketoacyl-[acyl-carrier-protein] synthase III from Rickettsia felis (strain ATCC VR-1525 / URRWXCal2) (Rickettsia azadi).